A 127-amino-acid polypeptide reads, in one-letter code: Small ribosomal subunit protein uS13 (127 aa).

Positions 92–127 (HRMGLPVRGQRTRTNARTRRGVRRTVAGKKKASAKK) are disordered. Positions 101–127 (QRTRTNARTRRGVRRTVAGKKKASAKK) are enriched in basic residues.

It belongs to the universal ribosomal protein uS13 family. In terms of assembly, part of the 30S ribosomal subunit. Forms a loose heterodimer with protein S19. Forms two bridges to the 50S subunit in the 70S ribosome.

Functionally, located at the top of the head of the 30S subunit, it contacts several helices of the 16S rRNA. In the 70S ribosome it contacts the 23S rRNA (bridge B1a) and protein L5 of the 50S subunit (bridge B1b), connecting the 2 subunits; these bridges are implicated in subunit movement. Contacts the tRNAs in the A and P-sites. The polypeptide is Small ribosomal subunit protein uS13 (Trichodesmium erythraeum (strain IMS101)).